A 42-amino-acid polypeptide reads, in one-letter code: Large ribosomal subunit protein bL36 (42 aa).

The protein belongs to the bacterial ribosomal protein bL36 family.

In Anaplasma phagocytophilum (strain HZ), this protein is Large ribosomal subunit protein bL36.